The following is a 629-amino-acid chain: Embryonic polyadenylate-binding protein (629 aa).

RRM domains lie at 11 to 89, 99 to 175, 191 to 268, and 294 to 370; these read ASLY…WSQR, GNVF…HFKS, TNVY…RAQK, and VNLY…LAQR. One can recognise a PABC domain in the interval 539–616; the sequence is QEPLTASSLA…AVAVLQAHQA (78 aa).

The protein belongs to the polyadenylate-binding protein type-1 family. Interacts with dazl in an RNA-independent manner. The C-terminus can self-associate and also interact with the C-terminus of pabpc1, independently of RNA. RRM 1 and RRM 2 interact with both eif4g1 and paip1, and the C-terminus also interacts with paip1. Prior to oocyte maturation, found in a complex with dazl and pum2 proteins and spdy1 mRNA; pum2 dissociates from the complex during maturation. Interacts with the translation termination factor sup35/erf3.

It localises to the cytoplasm. In terms of biological role, binds and protects the poly(A) tail of mRNA with or without an AU-rich element (ARE) and prevents mRNA deadenylation. Stimulates the translation of mRNAs to which it is bound during early development. This Xenopus tropicalis (Western clawed frog) protein is Embryonic polyadenylate-binding protein.